A 388-amino-acid polypeptide reads, in one-letter code: Cell adhesion molecule 4 (388 aa).

The N-terminal stretch at 1 to 20 (MGRARRFQWPLLLLWAAAAG) is a signal peptide. One can recognise an Ig-like V-type domain in the interval 21-119 (PGTAQEVQTE…DTHHQIATLT (99 aa)). Over 25 to 324 (QEVQTENVTV…VEAQTSVPYA (300 aa)) the chain is Extracellular. 2 N-linked (GlcNAc...) asparagine glycosylation sites follow: N31 and N67. 3 cysteine pairs are disulfide-bonded: C44–C104, C145–C199, and C245–C291. 2 Ig-like C2-type domains span residues 124–219 (PENP…YVLD) and 224–307 (PTAR…YVLV). The N-linked (GlcNAc...) asparagine glycan is linked to N286. Residues 325-345 (IVGGILALLVFLIICVLVGMV) traverse the membrane as a helical segment. Over 346–388 (WCSVRQKGSYLTHEASGLDEQGEAREAFLNGSDGHKRKEEFFI) the chain is Cytoplasmic. S361 bears the Phosphoserine mark.

Belongs to the nectin family. As to quaternary structure, monomer and homodimer. In terms of processing, N-glycosylated.

Its subcellular location is the membrane. Functionally, involved in the cell-cell adhesion. Has calcium- and magnesium-independent cell-cell adhesion activity. May have tumor-suppressor activity. This Rattus norvegicus (Rat) protein is Cell adhesion molecule 4 (Cadm4).